We begin with the raw amino-acid sequence, 591 residues long: L-fucose isomerase (591 aa).

Residues Glu337 and Asp361 each act as proton acceptor in the active site. Residues Glu337, Asp361, and His528 each coordinate Mn(2+).

Belongs to the L-fucose isomerase family. In terms of assembly, homohexamer. Mn(2+) serves as cofactor.

The protein resides in the cytoplasm. The enzyme catalyses L-fucose = L-fuculose. The protein operates within carbohydrate degradation; L-fucose degradation; L-lactaldehyde and glycerone phosphate from L-fucose: step 1/3. Functionally, converts the aldose L-fucose into the corresponding ketose L-fuculose. The chain is L-fucose isomerase from Escherichia coli O6:H1 (strain CFT073 / ATCC 700928 / UPEC).